An 88-amino-acid polypeptide reads, in one-letter code: Small ribosomal subunit protein bS20 (88 aa).

Belongs to the bacterial ribosomal protein bS20 family.

Binds directly to 16S ribosomal RNA. The sequence is that of Small ribosomal subunit protein bS20 from Aromatoleum aromaticum (strain DSM 19018 / LMG 30748 / EbN1) (Azoarcus sp. (strain EbN1)).